A 121-amino-acid chain; its full sequence is Ribonuclease P protein component (121 aa).

It belongs to the RnpA family. In terms of assembly, consists of a catalytic RNA component (M1 or rnpB) and a protein subunit.

The catalysed reaction is Endonucleolytic cleavage of RNA, removing 5'-extranucleotides from tRNA precursor.. In terms of biological role, RNaseP catalyzes the removal of the 5'-leader sequence from pre-tRNA to produce the mature 5'-terminus. It can also cleave other RNA substrates such as 4.5S RNA. The protein component plays an auxiliary but essential role in vivo by binding to the 5'-leader sequence and broadening the substrate specificity of the ribozyme. The chain is Ribonuclease P protein component from Alcanivorax borkumensis (strain ATCC 700651 / DSM 11573 / NCIMB 13689 / SK2).